The primary structure comprises 254 residues: Phosphoglycerate mutase 1 (254 aa).

Substrate contacts are provided by residues 10–17 (RHGESAWN) and 23–24 (SG). Residue His-11 is the Tele-phosphohistidine intermediate of the active site. 2 positions are modified to phosphoserine: Ser-14 and Ser-23. Tyr-26 carries the post-translational modification Phosphotyrosine. Ser-31 is subject to Phosphoserine. Substrate is bound by residues Arg-62, 89 to 92 (ERHY), and Lys-100. The active-site Proton donor/acceptor is Glu-89. Lys-106 carries the post-translational modification N6-acetyllysine. 116–117 (RR) contributes to the substrate binding site. The residue at position 118 (Ser-118) is a Phosphoserine. Substrate is bound at residue 187–188 (GN). At Lys-251 the chain carries N6-acetyllysine; alternate. Lys-251 carries the post-translational modification N6-succinyllysine; alternate. Residues Lys-253 and Lys-254 each carry the N6-acetyllysine modification.

This sequence belongs to the phosphoglycerate mutase family. BPG-dependent PGAM subfamily. As to quaternary structure, homodimer. Acetylated at Lys-253, Lys-253 and Lys-254 under high glucose condition. Acetylation increases catalytic activity. Under glucose restriction SIRT1 levels dramatically increase and it deacetylates the enzyme.

The enzyme catalyses (2R)-2-phosphoglycerate = (2R)-3-phosphoglycerate. It carries out the reaction (2R)-3-phospho-glyceroyl phosphate = (2R)-2,3-bisphosphoglycerate + H(+). In terms of biological role, catalyzes the interconversion of 2-phosphoglycerate and 3-phosphoglyceratea crucial step in glycolysis, by using 2,3-bisphosphoglycerate. Also catalyzes the interconversion of (2R)-2,3-bisphosphoglycerate and (2R)-3-phospho-glyceroyl phosphate. The protein is Phosphoglycerate mutase 1 of Pongo abelii (Sumatran orangutan).